The primary structure comprises 185 residues: UPF0301 protein Shew_1144 (185 aa).

Belongs to the UPF0301 (AlgH) family.

In Shewanella loihica (strain ATCC BAA-1088 / PV-4), this protein is UPF0301 protein Shew_1144.